The chain runs to 541 residues: Glycogen synthase (541 aa).

K17 is a binding site for ADP-alpha-D-glucose. Residues 497–541 form a disordered region; the sequence is LARPASPPDTAPVGKPARRRRTTALSTTARAHPVARAAGREKIRA.

It belongs to the glycosyltransferase 1 family. Bacterial/plant glycogen synthase subfamily.

The catalysed reaction is [(1-&gt;4)-alpha-D-glucosyl](n) + ADP-alpha-D-glucose = [(1-&gt;4)-alpha-D-glucosyl](n+1) + ADP + H(+). The protein operates within glycan biosynthesis; glycogen biosynthesis. In terms of biological role, synthesizes alpha-1,4-glucan chains using ADP-glucose. The chain is Glycogen synthase from Ralstonia nicotianae (strain ATCC BAA-1114 / GMI1000) (Ralstonia solanacearum).